Consider the following 347-residue polypeptide: NADH-ubiquinone oxidoreductase chain 2 (347 aa).

The next 11 helical transmembrane spans lie at 1-21 (MNPIVFSTILTTAIMGTMIVM), 25-45 (HWLMIWIGFEMNLLAIIPILM), 60-80 (FLTQATASMLLMMAIIINLMF), 89-109 (IFNPTASIIMTSALIMKLGLS), 111-131 (FHFWVPEVTQGIPLVSGLILL), 149-169 (INLDMLMTSALLSILVGGWGG), 178-198 (IMAYSSIAHMGWMTAILTYNP), 201-221 (TALNMLIYIMMTLTTFMLFML), 242-262 (SLILITMLSLGGLPPLSGFIP), 274-294 (DSIILPTSMAIMALLNLYFYM), and 323-343 (MNFLPTLIIMSTLLLPLTPIM).

The protein belongs to the complex I subunit 2 family. Core subunit of respiratory chain NADH dehydrogenase (Complex I) which is composed of 45 different subunits. Interacts with TMEM242.

Its subcellular location is the mitochondrion inner membrane. The catalysed reaction is a ubiquinone + NADH + 5 H(+)(in) = a ubiquinol + NAD(+) + 4 H(+)(out). In terms of biological role, core subunit of the mitochondrial membrane respiratory chain NADH dehydrogenase (Complex I) which catalyzes electron transfer from NADH through the respiratory chain, using ubiquinone as an electron acceptor. Essential for the catalytic activity and assembly of complex I. The sequence is that of NADH-ubiquinone oxidoreductase chain 2 from Ceratotherium simum (White rhinoceros).